We begin with the raw amino-acid sequence, 401 residues long: Carbamoyl phosphate synthase small chain (401 aa).

The segment at 1-203 is CPSase; sequence MTETAPWTTR…KGYGTLGEAD (203 aa). Residues serine 56, glycine 255, and glycine 257 each coordinate L-glutamine. The 189-residue stretch at 207-395 folds into the Glutamine amidotransferase type-1 domain; it reads HVVCVDFGVK…VNLLRENKGE (189 aa). The active-site Nucleophile is cysteine 284. L-glutamine-binding residues include leucine 285, glutamine 288, asparagine 326, glycine 328, and phenylalanine 329. Catalysis depends on residues histidine 368 and glutamate 370.

The protein belongs to the CarA family. As to quaternary structure, composed of two chains; the small (or glutamine) chain promotes the hydrolysis of glutamine to ammonia, which is used by the large (or ammonia) chain to synthesize carbamoyl phosphate. Tetramer of heterodimers (alpha,beta)4.

The catalysed reaction is hydrogencarbonate + L-glutamine + 2 ATP + H2O = carbamoyl phosphate + L-glutamate + 2 ADP + phosphate + 2 H(+). It carries out the reaction L-glutamine + H2O = L-glutamate + NH4(+). Its pathway is amino-acid biosynthesis; L-arginine biosynthesis; carbamoyl phosphate from bicarbonate: step 1/1. The protein operates within pyrimidine metabolism; UMP biosynthesis via de novo pathway; (S)-dihydroorotate from bicarbonate: step 1/3. In terms of biological role, small subunit of the glutamine-dependent carbamoyl phosphate synthetase (CPSase). CPSase catalyzes the formation of carbamoyl phosphate from the ammonia moiety of glutamine, carbonate, and phosphate donated by ATP, constituting the first step of 2 biosynthetic pathways, one leading to arginine and/or urea and the other to pyrimidine nucleotides. The small subunit (glutamine amidotransferase) binds and cleaves glutamine to supply the large subunit with the substrate ammonia. The sequence is that of Carbamoyl phosphate synthase small chain from Agrobacterium fabrum (strain C58 / ATCC 33970) (Agrobacterium tumefaciens (strain C58)).